Reading from the N-terminus, the 185-residue chain is Homeobox expressed in ES cells 1 (185 aa).

A DNA-binding region (homeobox) is located at residues 108 to 167 (GRRPRTAFTQNQIEVLENVFRVNCYPGIDIREDLAQKLNLEEDRIQIWFQNRRAKLKRSH).

The protein belongs to the ANF homeobox family. Can form heterodimers with PROP1 in binding to DNA. Interacts with TLE1.

It is found in the nucleus. Its function is as follows. Required for the normal development of the forebrain, eyes and other anterior structures such as the olfactory placodes and pituitary gland. Possible transcriptional repressor. Binds to the palindromic PIII sequence, 5'-AGCTTGAGTCTAATTGAATTAACTGTAC-3'. HESX1 and PROP1 bind as heterodimers on this palindromic site, and, in vitro, HESX1 can antagonize PROP1 activation. The sequence is that of Homeobox expressed in ES cells 1 (HESX1) from Pan troglodytes (Chimpanzee).